The chain runs to 380 residues: Polygalacturonase 2 (380 aa).

A signal peptide spans methionine 1–alanine 20. Residues leucine 21–arginine 38 constitute a propeptide that is removed on maturation. A disulfide bond links cysteine 42 and cysteine 60. PbH1 repeat units follow at residues alanine 173–serine 204 and serine 205–serine 226. Aspartate 219 serves as the catalytic Proton donor. Cysteine 221 and cysteine 237 are disulfide-bonded. Residue histidine 241 is part of the active site. PbH1 repeat units lie at residues valine 256 to threonine 277, valine 285 to glutamine 307, and threonine 319 to glycine 364. N-linked (GlcNAc...) asparagine glycosylation occurs at asparagine 287. Cystine bridges form between cysteine 347–cysteine 352 and cysteine 371–cysteine 380.

The protein belongs to the glycosyl hydrolase 28 family.

Its subcellular location is the secreted. The catalysed reaction is (1,4-alpha-D-galacturonosyl)n+m + H2O = (1,4-alpha-D-galacturonosyl)n + (1,4-alpha-D-galacturonosyl)m.. The chain is Polygalacturonase 2 (PG2) from Penicillium olsonii.